The primary structure comprises 156 residues: Endoribonuclease YbeY (156 aa).

Residues H122, H126, and H132 each coordinate Zn(2+).

This sequence belongs to the endoribonuclease YbeY family. It depends on Zn(2+) as a cofactor.

The protein localises to the cytoplasm. Functionally, single strand-specific metallo-endoribonuclease involved in late-stage 70S ribosome quality control and in maturation of the 3' terminus of the 16S rRNA. This Geobacillus sp. (strain WCH70) protein is Endoribonuclease YbeY.